The primary structure comprises 323 residues: MAVSLMQQPDKVYDVIIIGAGPAGTTAAIYTARAGWKTLVLYRAEADGALGVTQKIENYPGVPGPLSGYELLKIMREQAKSFGAEFVRGKVIATDLNSDPKKVYTIDGREFRGKTIIVASGAMERANKFKGEEEFLGRGVSYCGVCDAAFFKDQPVAVIGDDDYAIEEAEFIARFANKVFFVVPGSKIKAPPEVIEHFEKLPNVEILLRHRPIEIVGDQVVKGIKLKDLEKKEEKLLEVNGVFIFLGGTKPSVDFLMGQVEMTEGDCIVVNEEMMTSVPGVFAAGDVLCNEVKQAVVAAAMGCKAALAVDKFLSGKKKIVPQW.

An FAD-binding site is contributed by 42-49; sequence YRAEADGA. A disulfide bond links C143 and C146. 286 to 295 contributes to the FAD binding site; it reads DVLCNEVKQA.

This sequence belongs to the class-II pyridine nucleotide-disulfide oxidoreductase family. As to quaternary structure, homodimer. It depends on FAD as a cofactor.

Its subcellular location is the cytoplasm. The enzyme catalyses [thioredoxin]-dithiol + NADP(+) = [thioredoxin]-disulfide + NADPH + H(+). The protein is Thioredoxin reductase (trxB) of Aquifex aeolicus (strain VF5).